The primary structure comprises 312 residues: Glyoxylate/hydroxypyruvate reductase A (312 aa).

Arg227 is a catalytic residue. His275 acts as the Proton donor in catalysis.

This sequence belongs to the D-isomer specific 2-hydroxyacid dehydrogenase family. GhrA subfamily.

It is found in the cytoplasm. The catalysed reaction is glycolate + NADP(+) = glyoxylate + NADPH + H(+). It carries out the reaction (R)-glycerate + NAD(+) = 3-hydroxypyruvate + NADH + H(+). It catalyses the reaction (R)-glycerate + NADP(+) = 3-hydroxypyruvate + NADPH + H(+). In terms of biological role, catalyzes the NADPH-dependent reduction of glyoxylate and hydroxypyruvate into glycolate and glycerate, respectively. In Escherichia fergusonii (strain ATCC 35469 / DSM 13698 / CCUG 18766 / IAM 14443 / JCM 21226 / LMG 7866 / NBRC 102419 / NCTC 12128 / CDC 0568-73), this protein is Glyoxylate/hydroxypyruvate reductase A.